The sequence spans 629 residues: Polyadenylate-binding protein, cytoplasmic and nuclear (629 aa).

The tract at residues 1 to 47 is disordered; it reads MTLENKAEASPATKEETTTEAAPAEGEAKTESSEEKGSKEDQGDNAS. Residues 26–42 show a composition bias toward basic and acidic residues; sequence GEAKTESSEEKGSKEDQ. RRM domains are found at residues 46 to 124, 134 to 211, 227 to 304, and 330 to 407; these read ASLY…WSQR, GNIY…PHVP, TNVF…RAKK, and VNLY…LAQR. The disordered stretch occupies residues 465–543; that stretch reads GANPQMMMRP…RRKDGESRVA (79 aa). Low complexity-rich tracts occupy residues 493–506 and 514–531; these read MYGA…QGGF and GGQP…QFRG. A PABC domain is found at 542-624; sequence VADSISNALE…AITAYNEYLN (83 aa).

The protein belongs to the polyadenylate-binding protein type-1 family.

Its subcellular location is the cytoplasm. The protein localises to the nucleus. Its function is as follows. Binds the poly(A) tail of mRNA. Appears to be an important mediator of the multiple roles of the poly(A) tail in mRNA biogenesis, stability and translation. In the nucleus, involved in both mRNA cleavage and polyadenylation. Is also required for efficient mRNA export to the cytoplasm. Acts in concert with a poly(A)-specific nuclease (PAN) to affect poly(A) tail shortening, which may occur concomitantly with either nucleocytoplasmic mRNA transport or translational initiation. In the cytoplasm, stimulates translation initiation and regulates mRNA decay through translation termination-coupled poly(A) shortening, probably mediated by PAN. In Yarrowia lipolytica (strain CLIB 122 / E 150) (Yeast), this protein is Polyadenylate-binding protein, cytoplasmic and nuclear (PAB1).